We begin with the raw amino-acid sequence, 1192 residues long: Homeodomain-interacting protein kinase 3 (1192 aa).

Residue Lys27 forms a Glycyl lysine isopeptide (Lys-Gly) (interchain with G-Cter in SUMO); alternate linkage. Lys27 participates in a covalent cross-link: Glycyl lysine isopeptide (Lys-Gly) (interchain with G-Cter in SUMO2); alternate. The Protein kinase domain occupies 197–525 (YEVLDFLGRG…PIETLNHPFV (329 aa)). ATP is bound by residues 203 to 211 (LGRGTFGQV) and Lys226. Residue Asp322 is the Proton acceptor of the active site. Tyr359 carries the post-translational modification Phosphotyrosine. The segment at 767 to 921 (QNRSNSLQNT…NSMSDDEQES (155 aa)) is interaction with AR. Positions 775–868 (NTNIPHSAFI…SPRPSLRECK (94 aa)) are interaction with FAS. Residues 799–829 (CVDTQDNHTSEGEAGTCREASVRQDSSVSDK) are disordered. A required for localization to nuclear speckles region spans residues 832 to 988 (QTIIIADSPS…ESGLSVDEHM (157 aa)). The SUMO interaction motifs (SIM); required for nuclear localization and kinase activity stretch occupies residues 843-895 (AVSVITISSDSDDEETSPRPSLRECKGSLDCEACQSTLNIDRMCSLSSPDSTL). Residues 847-857 (ITISSDSDDEE) are interaction with UBL1. Low complexity predominate over residues 889-906 (SSPDSTLSTSSSGQSSPS). 2 disordered regions span residues 889–943 (SSPD…PFAE) and 956–1023 (LGTC…KPAA). Residue Lys1185 forms a Glycyl lysine isopeptide (Lys-Gly) (interchain with G-Cter in SUMO) linkage.

This sequence belongs to the protein kinase superfamily. CMGC Ser/Thr protein kinase family. HIPK subfamily. In terms of assembly, interacts with UBL1/SUMO-1. Interacts with and stabilizes ligand-bound androgen receptor (AR). Interacts with Nkx1-2. Interacts with FAS and DAXX. Probably part of a complex consisting of HIPK3, FAS and FADD. Binds to NR5A1/SF1, SPEN/MINT and RUNX2. In terms of processing, autophosphorylated, but autophosphorylation is not required for catalytic activity. May be sumoylated. In terms of tissue distribution, heart, skeletal muscle, spleen, testis and lung.

It localises to the cytoplasm. The protein localises to the nucleus. The catalysed reaction is L-seryl-[protein] + ATP = O-phospho-L-seryl-[protein] + ADP + H(+). The enzyme catalyses L-threonyl-[protein] + ATP = O-phospho-L-threonyl-[protein] + ADP + H(+). Functionally, serine/threonine-protein kinase involved in transcription regulation, apoptosis and steroidogenic gene expression. Phosphorylates JUN and RUNX2. Seems to negatively regulate apoptosis by promoting FADD phosphorylation. Enhances androgen receptor-mediated transcription. May act as a transcriptional corepressor for NK homeodomain transcription factors. The phosphorylation of NR5A1 activates SF1 leading to increased steroidogenic gene expression upon cAMP signaling pathway stimulation. In osteoblasts, supports transcription activation: phosphorylates RUNX2 that synergizes with SPEN/MINT to enhance FGFR2-mediated activation of the osteocalcin FGF-responsive element (OCFRE). The chain is Homeodomain-interacting protein kinase 3 (Hipk3) from Mus musculus (Mouse).